We begin with the raw amino-acid sequence, 421 residues long: N-succinylarginine dihydrolase (421 aa).

Residues 19 to 28, Asn105, and 132 to 133 contribute to the substrate site; these read AGLSLGNLAS and HR. The active site involves Glu167. Arg199 serves as a coordination point for substrate. The active site involves His235. Positions 237 and 346 each coordinate substrate. Cys352 acts as the Nucleophile in catalysis.

This sequence belongs to the succinylarginine dihydrolase family. As to quaternary structure, homodimer.

The catalysed reaction is N(2)-succinyl-L-arginine + 2 H2O + 2 H(+) = N(2)-succinyl-L-ornithine + 2 NH4(+) + CO2. It functions in the pathway amino-acid degradation; L-arginine degradation via AST pathway; L-glutamate and succinate from L-arginine: step 2/5. In terms of biological role, catalyzes the hydrolysis of N(2)-succinylarginine into N(2)-succinylornithine, ammonia and CO(2). This Novosphingobium aromaticivorans (strain ATCC 700278 / DSM 12444 / CCUG 56034 / CIP 105152 / NBRC 16084 / F199) protein is N-succinylarginine dihydrolase.